Consider the following 370-residue polypeptide: MKFIDEARIEVIAGDGGDGSASMRREKFVPFGGPDGGDGGRGGNVYAIADRNINTLIDYRYAKKHLARNGENGRGSDCYGKGGDDVTLRMPVGTVVTDMDTGELIADLTEHGQQVMLAQGGAGGLGNLHFKSSTNRAPRQKTDGKPGERRMLRLELKVLADVGLLGMPNAGKSTFISSVSNAKPKIADYPFTTLAPNLGVVRVGPSKSFVIADIPGLIEGAAEGAGLGHQFLRHLQRTGVLLHLVDLAPFDENVDPVAEARAIVGELRKYDEALYEKPRWLVLNKLDMVPEDEREARVADFLARFEWDGPVFEISALTGQGCEALCYAIYDYLAEHSDAHRAAEEEDLATDVRFRDAPPADGGATPGDDA.

In terms of domain architecture, Obg spans 1 to 159 (MKFIDEARIE…RMLRLELKVL (159 aa)). In terms of domain architecture, OBG-type G spans 160–334 (ADVGLLGMPN…LCYAIYDYLA (175 aa)). Residues 166–173 (GMPNAGKS), 191–195 (FTTLA), 213–216 (DIPG), 284–287 (NKLD), and 315–317 (SAL) contribute to the GTP site. Mg(2+) is bound by residues Ser173 and Thr193. The interval 344–370 (EEEDLATDVRFRDAPPADGGATPGDDA) is disordered.

Belongs to the TRAFAC class OBG-HflX-like GTPase superfamily. OBG GTPase family. Monomer. Mg(2+) is required as a cofactor.

The protein resides in the cytoplasm. Its function is as follows. An essential GTPase which binds GTP, GDP and possibly (p)ppGpp with moderate affinity, with high nucleotide exchange rates and a fairly low GTP hydrolysis rate. Plays a role in control of the cell cycle, stress response, ribosome biogenesis and in those bacteria that undergo differentiation, in morphogenesis control. This chain is GTPase Obg, found in Burkholderia ambifaria (strain ATCC BAA-244 / DSM 16087 / CCUG 44356 / LMG 19182 / AMMD) (Burkholderia cepacia (strain AMMD)).